The primary structure comprises 89 residues: Progonadoliberin-1 (89 aa).

An N-terminal signal peptide occupies residues 1-23 (MKAFPTFALLFLVLLFSAHVSDA). Q24 carries the post-translational modification Pyrrolidone carboxylic acid. At G33 the chain carries Glycine amide.

It belongs to the GnRH family. Expressed in the forebrain from larval stages.

It is found in the secreted. Functionally, stimulates the secretion of gonadotropins. In Xenopus laevis (African clawed frog), this protein is Progonadoliberin-1 (gnrh1).